Consider the following 302-residue polypeptide: Alpha-N-acetyl-neuraminyl-2,3-beta-galactosyl-1,3-N-acetyl-galactosaminide alpha-2,6-sialyltransferase (302 aa).

The Cytoplasmic portion of the chain corresponds to 1–6; sequence MKAPGR. The chain crosses the membrane as a helical; Signal-anchor for type II membrane protein span at residues 7-27; that stretch reads LVLIILCSVVFSAVYILLCCW. At 28 to 302 the chain is on the lumenal side; that stretch reads AGLPLCLATC…VFAHPSWRTE (275 aa). A disulfide bridge connects residues C76 and C225. N135 carries N-linked (GlcNAc...) asparagine glycosylation.

Belongs to the glycosyltransferase 29 family. As to expression, ubiquitous.

The protein localises to the golgi apparatus membrane. It carries out the reaction an alpha-Neu5Ac-(2-&gt;3)-beta-D-Gal-(1-&gt;3)-D-GlcNAc derivative + CMP-N-acetyl-beta-neuraminate = an alpha-Neu5Ac-(2-&gt;3)-beta-D-Gal-(1-&gt;3)-[alpha-Neu5Ac-(2-&gt;6)]-D-GlcNAc derivative + CMP + H(+). The catalysed reaction is N-acetyl-alpha-neuraminosyl-(2-&gt;3)-beta-D-galactosyl-(1-&gt;3)-N-acetyl-D-galactosamine + CMP-N-acetyl-beta-neuraminate = N-acetyl-alpha-neuraminosyl-(2-&gt;3)-beta-D-galactosyl-(1-&gt;3)-[N-acetyl-alpha-neuraminosyl-(2-&gt;6)]-N-acetyl-D-galactosamine + CMP + H(+). The enzyme catalyses a ganglioside GM1b (d18:1(4E)) + CMP-N-acetyl-beta-neuraminate = a ganglioside GD1alpha (d18:1(4E)) + CMP + H(+). It catalyses the reaction 3-O-[alpha-Neu5Ac-(2-&gt;3)-beta-D-Gal-(1-&gt;3)-alpha-D-GalNAc]-L-Ser-[protein] + CMP-N-acetyl-beta-neuraminate = a 3-O-{alpha-Neu5Ac-(2-&gt;3)-beta-D-Gal-(1-&gt;3)-[alpha-Neu5Ac-(2-&gt;6)]-alpha-D-GalNAc}-L-seryl-[protein] + CMP + H(+). It carries out the reaction 3-O-[alpha-Neu5Ac-(2-&gt;3)-beta-D-Gal-(1-&gt;3)-alpha-D-GalNAc]-L-Thr-[protein] + CMP-N-acetyl-beta-neuraminate = a 3-O-{alpha-Neu5Ac-(2-&gt;3)-beta-D-Gal-(1-&gt;3)-[alpha-Neu5Ac-(2-&gt;6)]-alpha-D-GalNAc}-L-threonyl-[protein] + CMP + H(+). It participates in protein modification; protein glycosylation. The protein operates within glycolipid biosynthesis. In terms of biological role, transfers the sialyl group (N-acetyl-alpha-neuraminyl or NeuAc) from CMP-NeuAc to the GalNAc residue on the NeuAc-alpha-2,3-Gal-beta-1,3-GalNAc sequence of glycoproteins and glycolipids forming an alpha-2,6-linkage. Produces branched type disialyl structures by transfer of a sialyl group onto a GalNAc residue inside the backbone core chains. Prefers O-glycans to glycoproteins or glycolipids. In Homo sapiens (Human), this protein is Alpha-N-acetyl-neuraminyl-2,3-beta-galactosyl-1,3-N-acetyl-galactosaminide alpha-2,6-sialyltransferase (ST6GALNAC4).